Reading from the N-terminus, the 211-residue chain is Uracil phosphoribosyltransferase (211 aa).

Residues Arg-78, Arg-103, and 130–138 (DPMLATGGT) contribute to the 5-phospho-alpha-D-ribose 1-diphosphate site. Residues Ile-195 and 200-202 (GDA) contribute to the uracil site. Position 201 (Asp-201) interacts with 5-phospho-alpha-D-ribose 1-diphosphate.

It belongs to the UPRTase family. Mg(2+) serves as cofactor.

The catalysed reaction is UMP + diphosphate = 5-phospho-alpha-D-ribose 1-diphosphate + uracil. It participates in pyrimidine metabolism; UMP biosynthesis via salvage pathway; UMP from uracil: step 1/1. Its activity is regulated as follows. Allosterically activated by GTP. In terms of biological role, catalyzes the conversion of uracil and 5-phospho-alpha-D-ribose 1-diphosphate (PRPP) to UMP and diphosphate. The polypeptide is Uracil phosphoribosyltransferase (Arthrobacter sp. (strain FB24)).